The sequence spans 760 residues: MMEERAAAAVASAASSCRPLGSGTAPNPTAAAPASSPAPGPGPVGKGGGGGGSPGPTAGPEPLSLPGILHFIQHEWARFEAEKARWEAERAELQAQVAFLQGERKGQENLKTDLVRRIKMLEYALKQERAKYHKLKFGTDLNQGEKKTDLSEQVSNGPVESVTLENSPLVWKEGRQLLRQYLEEVGYTDTILDMRSKRVRSLLGRSLELNGAGEPVEGAPRASPGPGGLSGGESLLVKQIEEQIKRNAAGKDGKERLGGSVLEQIPFLQNCEDEDSDEDDELDSVQHKKQRVRLPSKALVPEMEDEDEEDDSEDAINEFDFLGSGEDGEGSPDPRRCTSEGNPHELESRRVKLQGILADLRDVDGLPPKVTVPPPGTPQPRPHEGSFGFSSDVFIMDTIGGGEVSLGDLADLTVTNDNDLSCDLSDSKDAFKKTWNPKFTLRSHYDGIRSLAFHHSQSALLTASEDGTLKLWNLQKAVTAKKNAALDVEPIHAFRAHRGPVLAVTMGSNSEYCYSGGADARIHSWKIPDLNMDPYDGYDPSVLSHVLEGHGDAVWGLAFSPTSQRLASCSADGTVRIWDPSSSGPSCLCTFPMDGEHGIPTSVAFTSTEPAHVVASFRSGDTVLYDLEAGSALLTLESRGSSGPAQINQVVSHPSQPLTITAHDDRGIRFLDNRTGKSVHSMVAHLDAVTCLAVDPNGVFLMSGSHDCSLRLWSLDNKTCVQEITAHRKKHEEAIHAVACHPSKALIASAGADALAKVFV.

Residues 1–65 are disordered; it reads MMEERAAAAV…PTAGPEPLSL (65 aa). Low complexity predominate over residues 7–35; it reads AAAVASAASSCRPLGSGTAPNPTAAAPAS. A compositionally biased stretch (gly residues) spans 43–54; that stretch reads PVGKGGGGGGSP. The residue at position 53 (S53) is a Phosphoserine. A coiled-coil region spans residues 69–136; that stretch reads LHFIQHEWAR…QERAKYHKLK (68 aa). The segment at 71–79 is caveolin-binding; the sequence is FIQHEWARF. A calmodulin-binding region spans residues 165-182; it reads ENSPLVWKEGRQLLRQYL. A phosphoserine mark is found at S206, S223, and S276. Disordered regions lie at residues 210–233 and 272–346; these read NGAG…SGGE and EDED…PHEL. Acidic residues-rich tracts occupy residues 272–283 and 302–317; these read EDEDSDEDDELD and EMED…DAIN. Over residues 332–346 the composition is skewed to basic and acidic residues; it reads PDPRRCTSEGNPHEL. WD repeat units follow at residues 443–482, 496–535, 549–588, 595–635, 642–681, 684–723, and 730–759; these read SHYD…TAKK, AHRG…MDPY, GHGD…PSCL, GEHG…ALLT, SGPA…SVHS, AHLD…CVQE, and KHEE…AKVF.

This sequence belongs to the WD repeat striatin family. Part of the core of STRIPAK complexes composed of PP2A catalytic and scaffolding subunits, the striatins (PP2A regulatory subunits), the striatin-associated proteins MOB4, STRIP1 and STRIP2, PDCD10 and members of the STE20 kinases, such as STK24 and STK26. Interacts with CTTNBP2NL. As to expression, mainly expressed in brain but is also expressed at low levels in the kidney.

It localises to the cytoplasm. It is found in the membrane. Its subcellular location is the cell projection. The protein localises to the dendritic spine. Functionally, calmodulin-binding scaffolding protein which is the center of the striatin-interacting phosphatase and kinase (STRIPAK) complexes. STRIPAK complexes have critical roles in protein (de)phosphorylation and are regulators of multiple signaling pathways including Hippo, MAPK, nuclear receptor and cytoskeleton remodeling. Different types of STRIPAK complexes are involved in a variety of biological processes such as cell growth, differentiation, apoptosis, metabolism and immune regulation. Key regulator of the expanded Hippo signaling pathway by interacting and allowing the inhibition of MAP4K kinases by the STRIPAK complex. The protein is Striatin-4 (Strn4) of Mus musculus (Mouse).